Here is a 570-residue protein sequence, read N- to C-terminus: Proline--tRNA ligase (570 aa).

The protein belongs to the class-II aminoacyl-tRNA synthetase family. ProS type 1 subfamily. Homodimer.

Its subcellular location is the cytoplasm. The catalysed reaction is tRNA(Pro) + L-proline + ATP = L-prolyl-tRNA(Pro) + AMP + diphosphate. Catalyzes the attachment of proline to tRNA(Pro) in a two-step reaction: proline is first activated by ATP to form Pro-AMP and then transferred to the acceptor end of tRNA(Pro). As ProRS can inadvertently accommodate and process non-cognate amino acids such as alanine and cysteine, to avoid such errors it has two additional distinct editing activities against alanine. One activity is designated as 'pretransfer' editing and involves the tRNA(Pro)-independent hydrolysis of activated Ala-AMP. The other activity is designated 'posttransfer' editing and involves deacylation of mischarged Ala-tRNA(Pro). The misacylated Cys-tRNA(Pro) is not edited by ProRS. In Shewanella pealeana (strain ATCC 700345 / ANG-SQ1), this protein is Proline--tRNA ligase.